Here is a 257-residue protein sequence, read N- to C-terminus: Early E1A protein (257 aa).

Disordered regions lie at residues 26–46 (NATMGDDHPEPPTPFGTPSLH) and 75–103 (LAAEEASSPSSDSDSSLHTPRHDRGEKEI). Residues 43–51 (PSLHDLYDL) are interaction with RB1 in competition with E2F1. The segment covering 75-91 (LAAEEASSPSSDSDSSL) has biased composition (low complexity). Residues 79 to 144 (EASSPSSDSD…ASHGVQAVSE (66 aa)) form an interaction with UBE2I region. Over residues 94–103 (PRHDRGEKEI) the composition is skewed to basic and acidic residues. The PXLXP motif, interaction with host ZMYND11 motif lies at 104-108 (PGLKW). The short motif at 113–117 (LRCYE) is the LXCXE motif, interaction with host RB1 and TMEM173/STING element. Residues 158–178 (CKSCEFHRINTGDKAVLCALC) fold into a zinc finger. The segment at 191–221 (VSDADDETPTTESTLSPPEIGTSPSDNIVRP) is disordered. The span at 200–209 (TTESTLSPPE) shows a compositional bias: low complexity. The short motif at 246-250 (PLDLC) is the PXDLS motif, CTBP-binding element. A Nuclear localization signal motif is present at residues 252 to 257 (RKRPRH).

The protein belongs to the adenoviridae E1A protein family. Interacts with host UBE2I; this interaction interferes with polySUMOylation. Interacts with host RB1; this interaction induces the aberrant dissociation of RB1-E2F1 complex thereby disrupting the activity of RB1 and activating E2F1-regulated genes. Interacts with host ATF7; the interaction enhances ATF7-mediated viral transactivation activity which requires the zinc binding domains of both proteins. Isoform early E1A 32 kDa protein and isoform early E1A 26 kDa protein interact (via N-terminus) with CUL1 and E3 ubiquitin ligase RBX1; these interactions inhibit RBX1-CUL1-dependent elongation reaction of ubiquitin chains and attenuate ubiquitination of SCF(FBXW7) target proteins. Interacts (via PXLXP motif) with host ZMYND11/BS69 (via MYND-type zinc finger); this interaction inhibits E1A mediated transactivation. Interacts with host EP300; this interaction stimulates the acetylation of RB1 by recruiting EP300 and RB1 into a multimeric-protein complex. Interacts with host CTBP1 and CTBP2; this interaction seems to potentiate viral replication. Interacts with host DCAF7. Interacts with host DYRK1A. Interacts with host KPNA4; this interaction allows E1A import into the host nucleus. Interacts with host EP400; this interaction stabilizes MYC. Interacts with host TBP protein; this interaction probably disrupts the TBP-TATA complex. Interacts (via LXCXE motif) with host TMEM173/STING; this interaction impairs the ability of TMEM173/STING to sense cytosolic DNA and promote the production of type I interferon (IFN-alpha and IFN-beta). Interacts (via C-terminus) with host ZBED1/hDREF (via C-terminus); the interaction is direct.

It localises to the host nucleus. Plays a role in viral genome replication by driving entry of quiescent cells into the cell cycle. Stimulation of progression from G1 to S phase allows the virus to efficiently use the cellular DNA replicating machinery to achieve viral genome replication. E1A protein has both transforming and trans-activating activities. Induces the disassembly of the E2F1 transcription factor from RB1 by direct competition for the same binding site on RB1, with subsequent transcriptional activation of E2F1-regulated S-phase genes and of the E2 region of the adenoviral genome. Release of E2F1 leads to the ARF-mediated inhibition of MDM2 and causes TP53/p53 to accumulate because it is not targeted for degradation by MDM2-mediated ubiquitination anymore. This increase in TP53, in turn, would arrest the cell proliferation and direct its death but this effect is counteracted by the viral protein E1B-55K. Inactivation of the ability of RB1 to arrest the cell cycle is critical for cellular transformation, uncontrolled cellular growth and proliferation induced by viral infection. Interaction with RBX1 and CUL1 inhibits ubiquitination of the proteins targeted by SCF(FBXW7) ubiquitin ligase complex, and may be linked to unregulated host cell proliferation. The tumorigenesis-restraining activity of E1A may be related to the disruption of the host CtBP-CtIP complex through the CtBP binding motif. Interaction with host TMEM173/STING impairs the ability of TMEM173/STING to sense cytosolic DNA and promote the production of type I interferon (IFN-alpha and IFN-beta). Promotes the sumoylation of host ZBED1/hDREF with SUMO1. The polypeptide is Early E1A protein (Human adenovirus E serotype 4 (HAdV-4)).